The following is a 147-amino-acid chain: Ponticulin-like protein C1 (147 aa).

A signal peptide spans 1 to 20; sequence MKFTKSLLLLIVAVFASSNA. Residue asparagine 118 is the site of GPI-like-anchor amidated asparagine attachment. An N-linked (GlcNAc...) asparagine glycan is attached at asparagine 118. Positions 119–147 are cleaved as a propeptide — removed in mature form; sequence SSESDSSDSTRIGASFALAASVLLSMLAI.

Belongs to the ponticulin family. In terms of processing, the GPI-like-anchor contains a phosphoceramide group, rather than a phosphatidyl group.

Its subcellular location is the cell membrane. The protein is Ponticulin-like protein C1 (ponC1) of Dictyostelium discoideum (Social amoeba).